Here is a 768-residue protein sequence, read N- to C-terminus: ATP-dependent RNA helicase DBP4 (768 aa).

Positions 41 to 69 (VFFKDLPISNSTLKGLNDSAFLKLTDIQR) match the Q motif motif. The Helicase ATP-binding domain maps to 72 to 246 (IPMSLKGYDI…RLSLTDYKTI (175 aa)). An ATP-binding site is contributed by 85 to 92 (AKTGSGKT). The DEAD box signature appears at 194–197 (DEAD). One can recognise a Helicase C-terminal domain in the interval 280–439 (KLDMLYSFIK…SIKPQLQSLL (160 aa)). Disordered stretches follow at residues 581–612 (EEEL…KGNA) and 653–754 (KDVM…EPQT). The segment covering 653–666 (KDVMNEVDVEDKQV) has biased composition (basic and acidic residues). Basic residues predominate over residues 667-678 (AKQKKQEKKRKR). Residues 711 to 721 (DMQDPDSDDEE) show a composition bias toward acidic residues.

The protein belongs to the DEAD box helicase family. DDX10/DBP4 subfamily. As to quaternary structure, interacts with the U3 and U14 snoRNAs. Associates with pre-ribosomal complexes.

It is found in the nucleus. The protein resides in the nucleolus. The enzyme catalyses ATP + H2O = ADP + phosphate + H(+). Functionally, ATP-dependent RNA helicase required for ribosome biogenesis. Involved in the release of U14 snoRNA in pre-ribosomal complexes. Required for pre-rRNA cleavage at site A2. The polypeptide is ATP-dependent RNA helicase DBP4 (DBP4) (Vanderwaltozyma polyspora (strain ATCC 22028 / DSM 70294 / BCRC 21397 / CBS 2163 / NBRC 10782 / NRRL Y-8283 / UCD 57-17) (Kluyveromyces polysporus)).